Reading from the N-terminus, the 259-residue chain is 5'-nucleotidase SurE (259 aa).

Residues Asp-8, Asp-9, Ser-40, and Asn-92 each contribute to the a divalent metal cation site.

It belongs to the SurE nucleotidase family. Requires a divalent metal cation as cofactor.

It is found in the cytoplasm. It carries out the reaction a ribonucleoside 5'-phosphate + H2O = a ribonucleoside + phosphate. In terms of biological role, nucleotidase that shows phosphatase activity on nucleoside 5'-monophosphates. The chain is 5'-nucleotidase SurE from Xanthomonas campestris pv. campestris (strain B100).